A 317-amino-acid polypeptide reads, in one-letter code: L-lactate dehydrogenase (317 aa).

Residues 16–17 (FV), D38, K43, Y69, and 83–84 (GA) each bind NAD(+). Substrate is bound by residues Q86 and R92. NAD(+) is bound by residues S105, 122 to 124 (ATN), and S147. 124–127 (NPVD) serves as a coordination point for substrate. 152–155 (DTAR) lines the substrate pocket. Beta-D-fructose 1,6-bisphosphate-binding positions include R157 and 169–172 (QNVH). The active-site Proton acceptor is the H179. Phosphotyrosine is present on Y224. T233 is a substrate binding site.

Belongs to the LDH/MDH superfamily. LDH family. Exists as a dimer and a tetramer (dimer of dimers). The conversion occurs via the binding of fructose 1,6-bisphosphate (FBP) to the dimer.

It is found in the cytoplasm. The catalysed reaction is (S)-lactate + NAD(+) = pyruvate + NADH + H(+). It functions in the pathway fermentation; pyruvate fermentation to lactate; (S)-lactate from pyruvate: step 1/1. Its activity is regulated as follows. Allosterically activated by fructose 1,6-bisphosphate (FBP). The improvement in affinity for substrate occurs in two steps; the binding of fructose 1,6-bisphosphate (FBP) to the dimer, and the dimer to tetramer conversion. In terms of biological role, catalyzes the conversion of lactate to pyruvate. This Geobacillus stearothermophilus (Bacillus stearothermophilus) protein is L-lactate dehydrogenase.